A 247-amino-acid polypeptide reads, in one-letter code: Histone acetyltransferase MCC1 (247 aa).

Positions 25 to 198 (IHYRPINPND…DAFLFVYFIN (174 aa)) constitute an N-acetyltransferase domain.

The protein belongs to the acetyltransferase family.

The enzyme catalyses L-lysyl-[protein] + acetyl-CoA = N(6)-acetyl-L-lysyl-[protein] + CoA + H(+). Its function is as follows. Histone acetyltransferase that probably regulates acetylation status of histone H3 during meiosis. Histone acetylation may influence recombination and chromosome segregation. In Arabidopsis thaliana (Mouse-ear cress), this protein is Histone acetyltransferase MCC1 (MCC1).